The primary structure comprises 1024 residues: Multidrug resistance protein MdtC (1024 aa).

A run of 11 helical transmembrane segments spans residues 15 to 35 (WLLTLTIVLAGFLGFRLLPVA), 333 to 353 (EVEQSLAISVGLVVLVVFAFL), 360 to 380 (LIPAVAVPVSLIGTFAAMYLC), 387 to 407 (LSLMALTVATGFVVDDAIVVL), 431 to 451 (VGFTVISMSISLVAVFLPLLL), 463 to 483 (FAITLSVSIAISLVISLTLTP), 528 to 548 (WGLLVFVATLGLTVYLYISIP), 853 to 873 (LWLILAAIATVYIVLGILYES), 897 to 917 (LFNAPFSLIALIGILLLIGIV), 953 to 973 (PIIMTTLAALLGALPLALGSG), and 984 to 1004 (ITIVGGLVMSQLLTLFTTPVV).

This sequence belongs to the resistance-nodulation-cell division (RND) (TC 2.A.6) family. MdtC subfamily. As to quaternary structure, part of a tripartite efflux system composed of MdtA, MdtB and MdtC. MdtC forms a heteromultimer with MdtB.

The protein localises to the cell inner membrane. The polypeptide is Multidrug resistance protein MdtC (Erwinia tasmaniensis (strain DSM 17950 / CFBP 7177 / CIP 109463 / NCPPB 4357 / Et1/99)).